We begin with the raw amino-acid sequence, 574 residues long: Sulfate adenylyltransferase (574 aa).

The tract at residues 1–169 is N-terminal; sequence MANTPHGGVL…IEAVNKLNHY (169 aa). Positions 170 to 394 are catalytic; sequence DYVALRYTPA…LRESNPPRAS (225 aa). Gln197 provides a ligand contact to sulfate. Residues 197-200 and 291-294 contribute to the ATP site; these read QTRN and GRDH. Active-site residues include Thr198, Arg199, and Asn200. Residue Arg199 participates in sulfate binding. Ala295 provides a ligand contact to sulfate. Val333 contacts ATP. An allosteric regulation domain; adenylyl-sulfate kinase-like region spans residues 395 to 574; the sequence is QGFTIFLTGY…LESEGYFERL (180 aa). 3'-phosphoadenylyl sulfate-binding positions include 434-437, Arg451, 477-478, and Arg516; these read DTVR and IA.

In the N-terminal section; belongs to the sulfate adenylyltransferase family. It in the C-terminal section; belongs to the APS kinase family. In terms of assembly, homohexamer. Dimer of trimers.

It is found in the cytoplasm. The enzyme catalyses sulfate + ATP + H(+) = adenosine 5'-phosphosulfate + diphosphate. It functions in the pathway sulfur metabolism; hydrogen sulfide biosynthesis; sulfite from sulfate: step 1/3. Its activity is regulated as follows. Allosterically inhibited by 3'-phosphoadenosine 5'-phosphosulfate (PAPS). Its function is as follows. Catalyzes the first intracellular reaction of sulfate assimilation, forming adenosine-5'-phosphosulfate (APS) from inorganic sulfate and ATP. Plays an important role in sulfate activation as a component of the biosynthesis pathway of sulfur-containing amino acids. This Aspergillus niger protein is Sulfate adenylyltransferase.